Consider the following 495-residue polypeptide: UDP-N-acetylmuramoyl-L-alanyl-D-glutamate--2,6-diaminopimelate ligase (495 aa).

Residues Leu27, Ser29, and 44–46 (HQT) contribute to the UDP-N-acetyl-alpha-D-muramoyl-L-alanyl-D-glutamate site. 116-122 (GTNGKTT) is an ATP binding site. Residues Asn157, 158 to 159 (TT), Ser185, Gln191, and Arg193 contribute to the UDP-N-acetyl-alpha-D-muramoyl-L-alanyl-D-glutamate site. Position 225 is an N6-carboxylysine (Lys225). Residues Arg390, 414-417 (DNPR), Gly465, and Glu469 contribute to the meso-2,6-diaminopimelate site. Positions 414-417 (DNPR) match the Meso-diaminopimelate recognition motif motif.

The protein belongs to the MurCDEF family. MurE subfamily. Mg(2+) is required as a cofactor. Carboxylation is probably crucial for Mg(2+) binding and, consequently, for the gamma-phosphate positioning of ATP.

Its subcellular location is the cytoplasm. The catalysed reaction is UDP-N-acetyl-alpha-D-muramoyl-L-alanyl-D-glutamate + meso-2,6-diaminopimelate + ATP = UDP-N-acetyl-alpha-D-muramoyl-L-alanyl-gamma-D-glutamyl-meso-2,6-diaminopimelate + ADP + phosphate + H(+). The protein operates within cell wall biogenesis; peptidoglycan biosynthesis. Functionally, catalyzes the addition of meso-diaminopimelic acid to the nucleotide precursor UDP-N-acetylmuramoyl-L-alanyl-D-glutamate (UMAG) in the biosynthesis of bacterial cell-wall peptidoglycan. This Photorhabdus laumondii subsp. laumondii (strain DSM 15139 / CIP 105565 / TT01) (Photorhabdus luminescens subsp. laumondii) protein is UDP-N-acetylmuramoyl-L-alanyl-D-glutamate--2,6-diaminopimelate ligase.